The following is a 670-amino-acid chain: Oxidoreductase PigB (670 aa).

The signal sequence occupies residues 1 to 19; sequence MIIQRLFGILYMLAGLAKA. The next 4 membrane-spanning stretches (helical) occupy residues 53-73, 76-96, 98-118, and 238-258; these read GDVI…ILML, LWTT…VVIL, QSQP…LYML, and LVFF…VGFI.

This sequence belongs to the flavin monoamine oxidase family. FAD is required as a cofactor.

Its subcellular location is the membrane. It functions in the pathway antibiotic biosynthesis; prodigiosin biosynthesis. In terms of biological role, involved in the biosynthesis of 2-methyl-3-n-amyl-pyrrole (MAP), one of the terminal products involved in the biosynthesis of the red antibiotic prodigiosin (Pig). Catalyzes the oxidation of dihydro form of MAP (H2MAP) to yield MAP. The sequence is that of Oxidoreductase PigB from Serratia sp. (strain ATCC 39006) (Prodigiosinella confusarubida).